We begin with the raw amino-acid sequence, 423 residues long: Adenylosuccinate synthetase (423 aa).

Aspartate 12 (proton acceptor) is an active-site residue. Residues aspartate 12 and glycine 39 each contribute to the Mg(2+) site. IMP is bound by residues 37–40, threonine 129, arginine 143, asparagine 221, threonine 236, and arginine 300; that span reads NAGH. 39 to 41 is a GTP binding site; that stretch reads GHS. The active-site Proton donor is histidine 40. 296–302 provides a ligand contact to substrate; that stretch reads VSTGRKR. GTP-binding positions include arginine 302, 328–330, and 412–414; these read KLD and GTG.

Belongs to the adenylosuccinate synthetase family. As to quaternary structure, homodimer. The cofactor is Mg(2+).

It localises to the cytoplasm. The enzyme catalyses IMP + L-aspartate + GTP = N(6)-(1,2-dicarboxyethyl)-AMP + GDP + phosphate + 2 H(+). It participates in purine metabolism; AMP biosynthesis via de novo pathway; AMP from IMP: step 1/2. Plays an important role in the de novo pathway and in the salvage pathway of purine nucleotide biosynthesis. Catalyzes the first committed step in the biosynthesis of AMP from IMP. The chain is Adenylosuccinate synthetase from Pyricularia oryzae (strain 70-15 / ATCC MYA-4617 / FGSC 8958) (Rice blast fungus).